Here is a 168-residue protein sequence, read N- to C-terminus: Phosphopantetheine adenylyltransferase (168 aa).

Residue threonine 10 coordinates substrate. Residues 10 to 11 and histidine 18 each bind ATP; that span reads TF. 3 residues coordinate substrate: lysine 42, leucine 74, and arginine 88. ATP-binding positions include 89–91, glutamate 99, and 124–130; these read GLR and NSFISST.

The protein belongs to the bacterial CoaD family. In terms of assembly, homohexamer. Requires Mg(2+) as cofactor.

The protein localises to the cytoplasm. The catalysed reaction is (R)-4'-phosphopantetheine + ATP + H(+) = 3'-dephospho-CoA + diphosphate. It participates in cofactor biosynthesis; coenzyme A biosynthesis; CoA from (R)-pantothenate: step 4/5. Its function is as follows. Reversibly transfers an adenylyl group from ATP to 4'-phosphopantetheine, yielding dephospho-CoA (dPCoA) and pyrophosphate. The protein is Phosphopantetheine adenylyltransferase of Shewanella frigidimarina (strain NCIMB 400).